Consider the following 425-residue polypeptide: MNVLLLGSGGREHALAWKIAASPLLTKLYAAPGNPGIGAEAELVKLDITDHAAVTAFCQEKKIDLVVVGPEGPLVAGIADDLRAENIRVFGPSKAAARLEGSKGFTKDLCARYNIPTAAYGRFNDLASAKAYVDQTGAPIVIKADGLAAGKGVTVAMTSDEARAALDACFEGSFGAAGAEVVVEEFMTGEEASFFCLCDGTTALPFGTAQDHKRVGDGDVGPNTGGMGAYSPAPVMTPEMIERTMREIIEPTMRGMAELGAPFAGILFAGLMITDKGPKLIEYNTRFGDPECQVLMMRLKDDLLVLLNAAVDGQLAHTSIRWRDEAALTVVMAARGYPGTPEKGSVIRGVEQAAGEGVQIFHAGTAINGGALVANGGRVLNVTASGATVGEAQKRAYAALDRIDWPDGFCRRDIGWQAVARERAS.

Residues 107-312 (KDLCARYNIP…LLVLLNAAVD (206 aa)) form the ATP-grasp domain. 133-193 (VDQTGAPIVI…EEFMTGEEAS (61 aa)) lines the ATP pocket. A disordered region spans residues 214–233 (RVGDGDVGPNTGGMGAYSPA). The Mg(2+) site is built by Glu282 and Asn284.

The protein belongs to the GARS family. The cofactor is Mg(2+). Mn(2+) serves as cofactor.

It catalyses the reaction 5-phospho-beta-D-ribosylamine + glycine + ATP = N(1)-(5-phospho-beta-D-ribosyl)glycinamide + ADP + phosphate + H(+). It participates in purine metabolism; IMP biosynthesis via de novo pathway; N(1)-(5-phospho-D-ribosyl)glycinamide from 5-phospho-alpha-D-ribose 1-diphosphate: step 2/2. The protein is Phosphoribosylamine--glycine ligase of Mesorhizobium japonicum (strain LMG 29417 / CECT 9101 / MAFF 303099) (Mesorhizobium loti (strain MAFF 303099)).